A 663-amino-acid chain; its full sequence is Leishmanolysin-like peptidase (663 aa).

Zn(2+) is bound at residue histidine 246. Glutamate 247 is a catalytic residue. Residues histidine 250 and histidine 353 each contribute to the Zn(2+) site.

The protein belongs to the peptidase M8 family. It depends on Zn(2+) as a cofactor.

It localises to the cytoplasm. In terms of biological role, metalloprotease. This chain is Leishmanolysin-like peptidase, found in Caenorhabditis briggsae.